A 369-amino-acid chain; its full sequence is Cell division protein FtsZ (369 aa).

GTP contacts are provided by residues 27–31 (GAGNN), 119–121 (GTG), E150, and N189.

It belongs to the FtsZ family. In terms of assembly, homodimer. Polymerizes to form a dynamic ring structure in a strictly GTP-dependent manner. Interacts directly with several other division proteins.

Its subcellular location is the cytoplasm. In terms of biological role, essential cell division protein that forms a contractile ring structure (Z ring) at the future cell division site. The regulation of the ring assembly controls the timing and the location of cell division. One of the functions of the FtsZ ring is to recruit other cell division proteins to the septum to produce a new cell wall between the dividing cells. Binds GTP and shows GTPase activity. In Mycoplasma genitalium (strain ATCC 33530 / DSM 19775 / NCTC 10195 / G37) (Mycoplasmoides genitalium), this protein is Cell division protein FtsZ.